The chain runs to 340 residues: Glycerol-3-phosphate dehydrogenase [NAD(P)+] (340 aa).

The NADPH site is built by tryptophan 11, arginine 33, and lysine 110. Lysine 110, glycine 144, and serine 146 together coordinate sn-glycerol 3-phosphate. Alanine 148 is an NADPH binding site. Residues lysine 199, aspartate 252, serine 262, arginine 263, and asparagine 264 each contribute to the sn-glycerol 3-phosphate site. Lysine 199 (proton acceptor) is an active-site residue. Arginine 263 serves as a coordination point for NADPH. Valine 287 and glutamate 289 together coordinate NADPH.

It belongs to the NAD-dependent glycerol-3-phosphate dehydrogenase family.

The protein localises to the cytoplasm. It catalyses the reaction sn-glycerol 3-phosphate + NAD(+) = dihydroxyacetone phosphate + NADH + H(+). The catalysed reaction is sn-glycerol 3-phosphate + NADP(+) = dihydroxyacetone phosphate + NADPH + H(+). It functions in the pathway membrane lipid metabolism; glycerophospholipid metabolism. Catalyzes the reduction of the glycolytic intermediate dihydroxyacetone phosphate (DHAP) to sn-glycerol 3-phosphate (G3P), the key precursor for phospholipid synthesis. This chain is Glycerol-3-phosphate dehydrogenase [NAD(P)+], found in Polynucleobacter asymbioticus (strain DSM 18221 / CIP 109841 / QLW-P1DMWA-1) (Polynucleobacter necessarius subsp. asymbioticus).